A 444-amino-acid polypeptide reads, in one-letter code: N-succinylarginine dihydrolase (444 aa).

Substrate is bound by residues 19–28, Asn-110, and 137–138; these read AGLSFGNVAS and HR. Residue Glu-174 is part of the active site. Residue Arg-214 coordinates substrate. His-250 is an active-site residue. 2 residues coordinate substrate: Asp-252 and Asn-362. Cys-368 serves as the catalytic Nucleophile.

The protein belongs to the succinylarginine dihydrolase family. In terms of assembly, homodimer.

It carries out the reaction N(2)-succinyl-L-arginine + 2 H2O + 2 H(+) = N(2)-succinyl-L-ornithine + 2 NH4(+) + CO2. It participates in amino-acid degradation; L-arginine degradation via AST pathway; L-glutamate and succinate from L-arginine: step 2/5. Its function is as follows. Catalyzes the hydrolysis of N(2)-succinylarginine into N(2)-succinylornithine, ammonia and CO(2). This Shewanella frigidimarina (strain NCIMB 400) protein is N-succinylarginine dihydrolase.